The following is a 114-amino-acid chain: QSVKESEGGLFKPTDTLTLTCTVSGFSLSSYTVAWVRQAPGZGLEWIGILKSSGSTYYASWAKSRSTITRTQNTVNLMBSLTAZDTATYFCARITHGYLGLMDVWGPGTLVTVS.

Glutamine 1 is modified (pyrrolidone carboxylic acid). An Ig-like domain is found at 1 to 107; that stretch reads QSVKESEGGL…YLGLMDVWGP (107 aa).

This Oryctolagus cuniculus (Rabbit) protein is Ig heavy chain V-A2 region BS-1.